We begin with the raw amino-acid sequence, 728 residues long: Glycine--tRNA ligase (728 aa).

The N-terminal 32 residues, 1–32 (MPCLLPTLLRATRAALLLQSPRVVAAPASQRL), are a transit peptide targeting the mitochondrion. In terms of domain architecture, WHEP-TRS spans 52–108 (LLAPLRLAVRQQGDFVRKLKEDKAPQVDVDRAVAELKARKRVLEAKELALQPKDDIV). K193 is subject to N6-acetyllysine. Residue E288 coordinates glycine. Residues 320–322 (RNE) and 331–332 (RV) contribute to the ATP site. Glycine is bound at residue E339. Y442 is subject to Phosphotyrosine. Position 446–447 (446–447 (EI)) interacts with ATP. K490 bears the N6-acetyllysine mark. 565-567 (EPS) is a glycine binding site. R572 contacts ATP. Phosphoserine is present on S689. Position 725 is a phosphothreonine (T725).

Belongs to the class-II aminoacyl-tRNA synthetase family. Homodimer.

The protein resides in the cytoplasm. The protein localises to the mitochondrion. It localises to the cell projection. It is found in the axon. Its subcellular location is the secreted. The protein resides in the extracellular exosome. It catalyses the reaction tRNA(Gly) + glycine + ATP = glycyl-tRNA(Gly) + AMP + diphosphate. The enzyme catalyses 2 ATP + H(+) = P(1),P(4)-bis(5'-adenosyl) tetraphosphate + diphosphate. In terms of biological role, catalyzes the ATP-dependent ligation of glycine to the 3'-end of its cognate tRNA, via the formation of an aminoacyl-adenylate intermediate (Gly-AMP). Also produces diadenosine tetraphosphate (Ap4A), a universal pleiotropic signaling molecule needed for cell regulation pathways, by direct condensation of 2 ATPs. Thereby, may play a special role in Ap4A homeostasis. This chain is Glycine--tRNA ligase (Gars1), found in Rattus norvegicus (Rat).